A 239-amino-acid polypeptide reads, in one-letter code: Tetrahydromethanopterin S-methyltransferase subunit A (239 aa).

Residues 1-215 (MADKKAPAAG…EAAMIAKFNS (215 aa)) are Cytoplasmic-facing. H85 lines the 5-hydroxybenzimidazolylcob(I)amide pocket. The chain crosses the membrane as a helical span at residues 216 to 238 (GYYNGKIQGIAIGLFLSIVIFSL). Residue L239 is a topological domain, extracellular.

This sequence belongs to the MtrA family. In terms of assembly, the complex is composed of 8 subunits; MtrA, MtrB, MtrC, MtrD, MtrE, MtrF, MtrG and MtrH. 5-hydroxybenzimidazolylcob(I)amide is required as a cofactor.

The protein localises to the cell membrane. It catalyses the reaction 5-methyl-5,6,7,8-tetrahydromethanopterin + coenzyme M + 2 Na(+)(in) = 5,6,7,8-tetrahydromethanopterin + methyl-coenzyme M + 2 Na(+)(out). It functions in the pathway one-carbon metabolism; methanogenesis from CO(2); methyl-coenzyme M from 5,10-methylene-5,6,7,8-tetrahydromethanopterin: step 2/2. Functionally, part of a complex that catalyzes the formation of methyl-coenzyme M and tetrahydromethanopterin from coenzyme M and methyl-tetrahydromethanopterin. This is an energy-conserving, sodium-ion translocating step. The polypeptide is Tetrahydromethanopterin S-methyltransferase subunit A (Methanococcus maripaludis (strain DSM 14266 / JCM 13030 / NBRC 101832 / S2 / LL)).